The following is a 1196-amino-acid chain: Contactin rig-6 (1196 aa).

Positions 1–19 (MMMLIRCISIFLLFGFVNA) are cleaved as a signal peptide. N-linked (GlcNAc...) asparagine glycosylation is found at asparagine 100 and asparagine 195. Ig-like C2-type domains are found at residues 144–225 (PQIS…ARNS) and 232–319 (PPIL…CSLS). Intrachain disulfides connect cysteine 169/cysteine 220 and cysteine 263/cysteine 316. Asparagine 343 carries N-linked (GlcNAc...) asparagine glycosylation. Ig-like C2-type domains lie at 355 to 438 (PQIF…VKLR), 441 to 533 (PSIL…ALLT), 539 to 626 (PVFP…VQLI), and 631 to 730 (PSIK…EFVT). Cysteine 372 and cysteine 420 are oxidised to a cystine. Residue asparagine 457 is glycosylated (N-linked (GlcNAc...) asparagine). Cystine bridges form between cysteine 462-cysteine 517 and cysteine 562-cysteine 610. N-linked (GlcNAc...) asparagine glycosylation is present at asparagine 644. Residues cysteine 653 and cysteine 718 are joined by a disulfide bond. Fibronectin type-III domains lie at 736–844 (SPIA…TAPG), 849–961 (TIDN…SHGE), 963–1057 (KKVS…TKQH), and 1064–1168 (LIGK…LGSP). Residues asparagine 895, asparagine 925, asparagine 945, asparagine 974, asparagine 979, asparagine 986, asparagine 1002, and asparagine 1092 are each glycosylated (N-linked (GlcNAc...) asparagine). The helical transmembrane segment at 1174–1194 (TTGSSDVPIPSLLLLLLLLLW) threads the bilayer. The GPI-anchor amidated serine moiety is linked to residue serine 1177. Residues 1178–1196 (SDVPIPSLLLLLLLLLWRL) constitute a propeptide, removed in mature form.

Belongs to the immunoglobulin superfamily. Contactin family. Interacts with sax-7; the interaction establishes synaptic connections between neurons. In terms of tissue distribution, expressed in neurons including the I1 and I3 pharyngeal interneurons, NSM and VNC motor neurons, HSN and CAN neurons, the ALM and PLM touch receptor neurons and other unidentified head neurons. Expressed in AVG interneurons. Also expressed in somatic muscles, the excretory canal, the excretory cell and the hypodermis.

The protein localises to the cell membrane. The protein resides in the perikaryon. It localises to the cell projection. It is found in the axon. Its subcellular location is the synapse. The protein localises to the cytoplasm. Probable cell adhesion protein involved in patterning of the nervous system, playing a role in ALM and PLM touch receptor axon growth and VNC axon navigation. By associating with the transmembrane protein sax-7, mediates axonal interactions to establish synaptic connections between the AVG interneuron and the two PHC sensory neurons. Also required for non-neuronal cell migration in the excretory canal, regulating excretory canal elongation and excretory cell morphogenesis. Plays a role in regulating male mating behavior. The polypeptide is Contactin rig-6 (Caenorhabditis elegans).